A 55-amino-acid chain; its full sequence is Large ribosomal subunit protein bL33 (55 aa).

This sequence belongs to the bacterial ribosomal protein bL33 family.

This is Large ribosomal subunit protein bL33 from Methylobacterium radiotolerans (strain ATCC 27329 / DSM 1819 / JCM 2831 / NBRC 15690 / NCIMB 10815 / 0-1).